A 602-amino-acid chain; its full sequence is Basic-leucine zipper transcription factor B (602 aa).

Residues 1-10 are compositionally biased toward polar residues; the sequence is MNQFYQSTTG. Positions 1 to 128 are disordered; the sequence is MNQFYQSTTG…NRVNQNLASR (128 aa). Composition is skewed to low complexity over residues 11-54 and 66-102; these read GQQN…TSTS and QQQI…YNGD. Positions 58-94 form a coiled coil; it reads KNKDNQSKQQQIQQQQIQQQQQQQQQQQQQIQQQSVD. The region spanning 113–176 is the bZIP domain; sequence ENKKNRNRVN…GVEIMKPDPA (64 aa). Positions 115-135 are basic motif; sequence KKNRNRVNQNLASRNYRQRKK. The leucine-zipper stretch occupies residues 138 to 145; that stretch reads IKEIEEKL. 2 disordered regions span residues 328–401 and 525–602; these read TNLS…QNNN and QNQT…PSRQ. Composition is skewed to low complexity over residues 336–350, 358–401, and 525–592; these read PNPT…TQST, LTLL…QNNN, and QNQT…SSPY. Residues 509–552 adopt a coiled-coil conformation; sequence TFSQQTQQLQQAQLQLQNQTKQQQQQLQNNNNNNNNNNNNNNSF. Positions 593–602 are enriched in polar residues; it reads NHHQQQPSRQ.

This sequence belongs to the bZIP family. In terms of assembly, binds DNA as a dimer. Heterodimerizes with dimA; in vitro. Also able to form homodimer; in vitro.

It localises to the nucleus. Transcriptional regulator involved in DIF-1 signaling. DIF-1 (Differentiation Inducing Factor-1) is a signal molecule involved in the differentiation of pstO (prestalk-O) cells. May be a direct activator of ecmA. In Dictyostelium discoideum (Social amoeba), this protein is Basic-leucine zipper transcription factor B (dimB).